Reading from the N-terminus, the 578-residue chain is Maltogenic alpha-amylase (578 aa).

It belongs to the glycosyl hydrolase 13 family.

It carries out the reaction hydrolysis of (1-&gt;4)-alpha-D-glucosidic linkages in polysaccharides so as to remove successive alpha-maltose residues from the non-reducing ends of the chains.. In terms of biological role, converts starch into maltose. In contrary to other maltogenic alpha-amylases BlmA cannot hydrolyze 1,4-alpha-glucosidic linkage next to 1,6-alpha-glucosidic linkages. This is Maltogenic alpha-amylase (blmA) from Bacillus licheniformis.